The sequence spans 43 residues: Omega-ctenitoxin-Pr1a (43 aa).

4 disulfide bridges follow: Cys-2/Cys-17, Cys-9/Cys-22, Cys-16/Cys-33, and Cys-24/Cys-31. Glycine amide is present on Gly-43.

Expressed by the venom gland.

It is found in the secreted. In terms of biological role, inhibits high-voltage activated calcium channels. Shifts the voltage-dependence for activation towards hyperpolarized membrane potentials for L- (Cav1), P/Q- (Cav2.1/CACNA1A) and R-type (Cav2.3/CACNA1E) calcium currents. Causes immediate agitation and clockwise gyration, followed by the gradual development of general flaccid paralysis when injected intracerebroventricular into mice at dose levels of 5 ug per mouse. This is Omega-ctenitoxin-Pr1a from Phoneutria reidyi (Brazilian Amazonian armed spider).